A 203-amino-acid chain; its full sequence is Glycerol-3-phosphate acyltransferase (203 aa).

4 helical membrane-spanning segments follow: residues leucine 4–isoleucine 24, proline 80–phenylalanine 100, alanine 116–isoleucine 136, and glycine 138–valine 158.

It belongs to the PlsY family. In terms of assembly, probably interacts with PlsX.

The protein localises to the cell inner membrane. The catalysed reaction is an acyl phosphate + sn-glycerol 3-phosphate = a 1-acyl-sn-glycero-3-phosphate + phosphate. The protein operates within lipid metabolism; phospholipid metabolism. In terms of biological role, catalyzes the transfer of an acyl group from acyl-phosphate (acyl-PO(4)) to glycerol-3-phosphate (G3P) to form lysophosphatidic acid (LPA). This enzyme utilizes acyl-phosphate as fatty acyl donor, but not acyl-CoA or acyl-ACP. In Photobacterium profundum (strain SS9), this protein is Glycerol-3-phosphate acyltransferase.